The chain runs to 366 residues: Mannonate dehydratase (366 aa).

Belongs to the mannonate dehydratase family. Fe(2+) is required as a cofactor. It depends on Mn(2+) as a cofactor.

It carries out the reaction D-mannonate = 2-dehydro-3-deoxy-D-gluconate + H2O. The protein operates within carbohydrate metabolism; pentose and glucuronate interconversion. Catalyzes the dehydration of D-mannonate. The sequence is that of Mannonate dehydratase from Streptococcus suis (strain 98HAH33).